The sequence spans 249 residues: Tetraspanin-7 (249 aa).

Over 1 to 16 (MASRRMETKPVITCLK) the chain is Cytoplasmic. The chain crosses the membrane as a helical span at residues 17 to 40 (TLLIIYSFVFWITGVILLAVGVWG). Residues 41 to 56 (KLTLGTYISLIAENST) lie on the Extracellular side of the membrane. A glycan (N-linked (GlcNAc...) asparagine) is linked at Asn-54. The chain crosses the membrane as a helical span at residues 57–75 (NAPYVLIGTGTTIVVFGLF). The Cytoplasmic portion of the chain corresponds to 76–86 (GCFATCRGSPW). A helical membrane pass occupies residues 87-112 (MLKLYAMFLSLVFLAELVAGISGFVF). At 113-213 (RHEIKDTFLR…LVTSFMETNM (101 aa)) the chain is on the extracellular side. Asn-155, Asn-158, Asn-177, and Asn-188 each carry an N-linked (GlcNAc...) asparagine glycan. A helical transmembrane segment spans residues 214–234 (GIIAGVAFGIAFSQLIGMLLA). Topologically, residues 235-249 (CCLSRFITANQYEMV) are cytoplasmic.

The protein belongs to the tetraspanin (TM4SF) family. In terms of assembly, (Microbial infection) Interacts with herpes simplex virus 1 (HHV-1) UL35. As to expression, not solely expressed in T-cells. Expressed in acute myelocytic leukemia cells of some patients.

The protein resides in the membrane. In terms of biological role, may be involved in cell proliferation and cell motility. This is Tetraspanin-7 (TSPAN7) from Homo sapiens (Human).